A 432-amino-acid chain; its full sequence is Trigger factor (432 aa).

In terms of domain architecture, PPIase FKBP-type spans 161–246; it reads EDRVTIDFTG…LKKVEERELP (86 aa).

Belongs to the FKBP-type PPIase family. Tig subfamily. Homodimer and monomer. In vivo most of the ribosomes are in complex with monomeric TF. Uncomplexed TF, however, is in a monomer-dimer equilibrium with approximately two thirds of TF existing in a dimeric state.

It is found in the cytoplasm. It carries out the reaction [protein]-peptidylproline (omega=180) = [protein]-peptidylproline (omega=0). Involved in protein export. Acts as a chaperone by maintaining the newly synthesized protein in an open conformation. Functions as a peptidyl-prolyl cis-trans isomerase. In Escherichia coli O127:H6 (strain E2348/69 / EPEC), this protein is Trigger factor.